We begin with the raw amino-acid sequence, 616 residues long: Proline--tRNA ligase (616 aa).

Belongs to the class-II aminoacyl-tRNA synthetase family. ProS type 1 subfamily. Homodimer.

The protein localises to the cytoplasm. The catalysed reaction is tRNA(Pro) + L-proline + ATP = L-prolyl-tRNA(Pro) + AMP + diphosphate. Its function is as follows. Catalyzes the attachment of proline to tRNA(Pro) in a two-step reaction: proline is first activated by ATP to form Pro-AMP and then transferred to the acceptor end of tRNA(Pro). As ProRS can inadvertently accommodate and process non-cognate amino acids such as alanine and cysteine, to avoid such errors it has two additional distinct editing activities against alanine. One activity is designated as 'pretransfer' editing and involves the tRNA(Pro)-independent hydrolysis of activated Ala-AMP. The other activity is designated 'posttransfer' editing and involves deacylation of mischarged Ala-tRNA(Pro). The misacylated Cys-tRNA(Pro) is not edited by ProRS. In Streptococcus sanguinis (strain SK36), this protein is Proline--tRNA ligase.